The primary structure comprises 249 residues: Ribonuclease 3 (249 aa).

Positions 29–151 constitute an RNase III domain; sequence SSDIEVIKKN…LIGALYECLR (123 aa). A Mg(2+)-binding site is contributed by Glu65. The active site involves Asp69. 2 residues coordinate Mg(2+): Glu137 and Glu140. Glu140 is an active-site residue. Positions 179–249 constitute a DRBM domain; sequence NEKSALQEWS…AKEALKKLTN (71 aa). The tract at residues 227–249 is disordered; sequence GWGSSRKKAQKEAAKEALKKLTN. Basic and acidic residues predominate over residues 236–249; sequence QKEAAKEALKKLTN.

Belongs to the ribonuclease III family. Homodimer. Mg(2+) serves as cofactor.

Its subcellular location is the cytoplasm. It carries out the reaction Endonucleolytic cleavage to 5'-phosphomonoester.. Functionally, digests double-stranded RNA. Involved in the processing of primary rRNA transcript to yield the immediate precursors to the large and small rRNAs (23S and 16S). Processes some mRNAs, and tRNAs when they are encoded in the rRNA operon. Processes pre-crRNA and tracrRNA of type II CRISPR loci if present in the organism. This Prochlorococcus marinus (strain SARG / CCMP1375 / SS120) protein is Ribonuclease 3.